The following is a 101-amino-acid chain: NADH-quinone oxidoreductase subunit K (101 aa).

3 helical membrane passes run 4 to 24 (LSHY…GIFL), 30 to 50 (IILL…FVAF), and 61 to 81 (IFVF…LAIL).

It belongs to the complex I subunit 4L family. In terms of assembly, NDH-1 is composed of 14 different subunits. Subunits NuoA, H, J, K, L, M, N constitute the membrane sector of the complex.

It localises to the cell inner membrane. The catalysed reaction is a quinone + NADH + 5 H(+)(in) = a quinol + NAD(+) + 4 H(+)(out). NDH-1 shuttles electrons from NADH, via FMN and iron-sulfur (Fe-S) centers, to quinones in the respiratory chain. The immediate electron acceptor for the enzyme in this species is believed to be ubiquinone. Couples the redox reaction to proton translocation (for every two electrons transferred, four hydrogen ions are translocated across the cytoplasmic membrane), and thus conserves the redox energy in a proton gradient. This is NADH-quinone oxidoreductase subunit K from Nitrosomonas eutropha (strain DSM 101675 / C91 / Nm57).